A 494-amino-acid polypeptide reads, in one-letter code: Ketol-acid reductoisomerase (NADP(+)) (494 aa).

Residues 14-208 (LDQLGRCRFM…GGHRAGCLES (195 aa)) form the KARI N-terminal Rossmann domain. Residues 45–48 (CGAQ), Arg-68, Arg-76, Ser-78, and 108–110 (DKQ) each bind NADP(+). Residue His-132 is part of the active site. Gly-158 provides a ligand contact to NADP(+). KARI C-terminal knotted domains follow at residues 209–344 (SFVA…NYPS) and 345–487 (TDVE…MTDM). Residues Asp-217, Glu-221, Glu-389, and Glu-393 each coordinate Mg(2+). Position 414 (Ser-414) interacts with substrate.

This sequence belongs to the ketol-acid reductoisomerase family. Mg(2+) is required as a cofactor.

It catalyses the reaction (2R)-2,3-dihydroxy-3-methylbutanoate + NADP(+) = (2S)-2-acetolactate + NADPH + H(+). The enzyme catalyses (2R,3R)-2,3-dihydroxy-3-methylpentanoate + NADP(+) = (S)-2-ethyl-2-hydroxy-3-oxobutanoate + NADPH + H(+). The protein operates within amino-acid biosynthesis; L-isoleucine biosynthesis; L-isoleucine from 2-oxobutanoate: step 2/4. It functions in the pathway amino-acid biosynthesis; L-valine biosynthesis; L-valine from pyruvate: step 2/4. Involved in the biosynthesis of branched-chain amino acids (BCAA). Catalyzes an alkyl-migration followed by a ketol-acid reduction of (S)-2-acetolactate (S2AL) to yield (R)-2,3-dihydroxy-isovalerate. In the isomerase reaction, S2AL is rearranged via a Mg-dependent methyl migration to produce 3-hydroxy-3-methyl-2-ketobutyrate (HMKB). In the reductase reaction, this 2-ketoacid undergoes a metal-dependent reduction by NADPH to yield (R)-2,3-dihydroxy-isovalerate. The protein is Ketol-acid reductoisomerase (NADP(+)) of Vibrio vulnificus (strain CMCP6).